The following is a 549-amino-acid chain: Glucose-6-phosphate isomerase (549 aa).

3 positions are modified to N6-acetyllysine: Lys-80, Lys-228, and Lys-234. Catalysis depends on Glu-355, which acts as the Proton donor. Residues His-386 and Lys-514 contribute to the active site.

It belongs to the GPI family.

It is found in the cytoplasm. It catalyses the reaction alpha-D-glucose 6-phosphate = beta-D-fructose 6-phosphate. It functions in the pathway carbohydrate biosynthesis; gluconeogenesis. Its pathway is carbohydrate degradation; glycolysis; D-glyceraldehyde 3-phosphate and glycerone phosphate from D-glucose: step 2/4. Functionally, catalyzes the reversible isomerization of glucose-6-phosphate to fructose-6-phosphate. The chain is Glucose-6-phosphate isomerase from Escherichia fergusonii (strain ATCC 35469 / DSM 13698 / CCUG 18766 / IAM 14443 / JCM 21226 / LMG 7866 / NBRC 102419 / NCTC 12128 / CDC 0568-73).